The sequence spans 61 residues: Small ribosomal subunit protein uS14 (61 aa).

4 residues coordinate Zn(2+): Cys24, Cys27, Cys40, and Cys43.

Belongs to the universal ribosomal protein uS14 family. Zinc-binding uS14 subfamily. Part of the 30S ribosomal subunit. Contacts proteins S3 and S10. Requires Zn(2+) as cofactor.

Functionally, binds 16S rRNA, required for the assembly of 30S particles and may also be responsible for determining the conformation of the 16S rRNA at the A site. The protein is Small ribosomal subunit protein uS14 of Acidithiobacillus ferrooxidans (strain ATCC 23270 / DSM 14882 / CIP 104768 / NCIMB 8455) (Ferrobacillus ferrooxidans (strain ATCC 23270)).